Reading from the N-terminus, the 298-residue chain is Pyridoxal 5'-phosphate synthase subunit PdxS (298 aa).

Residue D24 participates in D-ribose 5-phosphate binding. Residue K81 is the Schiff-base intermediate with D-ribose 5-phosphate of the active site. G153 provides a ligand contact to D-ribose 5-phosphate. Residue R165 coordinates D-glyceraldehyde 3-phosphate. D-ribose 5-phosphate contacts are provided by residues G214 and 235–236 (GS).

This sequence belongs to the PdxS/SNZ family. In terms of assembly, in the presence of PdxT, forms a dodecamer of heterodimers.

It carries out the reaction aldehydo-D-ribose 5-phosphate + D-glyceraldehyde 3-phosphate + L-glutamine = pyridoxal 5'-phosphate + L-glutamate + phosphate + 3 H2O + H(+). The protein operates within cofactor biosynthesis; pyridoxal 5'-phosphate biosynthesis. In terms of biological role, catalyzes the formation of pyridoxal 5'-phosphate from ribose 5-phosphate (RBP), glyceraldehyde 3-phosphate (G3P) and ammonia. The ammonia is provided by the PdxT subunit. Can also use ribulose 5-phosphate and dihydroxyacetone phosphate as substrates, resulting from enzyme-catalyzed isomerization of RBP and G3P, respectively. The polypeptide is Pyridoxal 5'-phosphate synthase subunit PdxS (Halalkalibacterium halodurans (strain ATCC BAA-125 / DSM 18197 / FERM 7344 / JCM 9153 / C-125) (Bacillus halodurans)).